We begin with the raw amino-acid sequence, 451 residues long: UPF0210 protein LMHCC_2097 (451 aa).

It belongs to the UPF0210 family. As to quaternary structure, homodimer.

This is UPF0210 protein LMHCC_2097 from Listeria monocytogenes serotype 4a (strain HCC23).